A 673-amino-acid chain; its full sequence is Clotting factor G alpha subunit (673 aa).

The N-terminal stretch at M1–C19 is a signal peptide. Residues L27–T257 form the GH16 domain. E137 functions as the Nucleophile in the catalytic mechanism. E142 (proton donor) is an active-site residue. Residue N186 is glycosylated (N-linked (GlcNAc...) asparagine). The 139-residue stretch at L266–I404 folds into the Ricin B-type lectin domain. CBM6 domains lie at K411–T533 and K549–T671.

The protein belongs to the glycosyl hydrolase 16 family. As to quaternary structure, clotting factor G is a heterodimer composed of two non-covalently associated subunits, alpha and beta. In terms of processing, in presence of (1-&gt;3)-beta-glucan, proteolytically cleaved into a 55kDa and a 17kDa forms. Expressed in hemocytes (at protein level).

In terms of biological role, component of the heterodimer clotting factor G which may play a role in defense mechanisms against fungi. Initiates a (1-&gt;3)-beta-glucan-sensing clotting pathway whereby the alpha subunit binds to glucans containing (1-&gt;3)-beta linkages, which are components of the fungal cell wall, and the beta subunit catalyzes the activation of proclotting enzyme. The sequence is that of Clotting factor G alpha subunit from Tachypleus tridentatus (Japanese horseshoe crab).